The primary structure comprises 390 residues: Chorismate synthase 2 (390 aa).

The NADP(+) site is built by Arg39 and Arg45. FMN-binding positions include 132–134 (RSS), 253–254 (NA), Gly298, 313–317 (KPIPT), and Arg339.

It belongs to the chorismate synthase family. As to quaternary structure, homotetramer. FMNH2 serves as cofactor.

It carries out the reaction 5-O-(1-carboxyvinyl)-3-phosphoshikimate = chorismate + phosphate. The protein operates within metabolic intermediate biosynthesis; chorismate biosynthesis; chorismate from D-erythrose 4-phosphate and phosphoenolpyruvate: step 7/7. In terms of biological role, catalyzes the anti-1,4-elimination of the C-3 phosphate and the C-6 proR hydrogen from 5-enolpyruvylshikimate-3-phosphate (EPSP) to yield chorismate, which is the branch point compound that serves as the starting substrate for the three terminal pathways of aromatic amino acid biosynthesis. This reaction introduces a second double bond into the aromatic ring system. The chain is Chorismate synthase 2 from Bacillus cereus (strain ATCC 14579 / DSM 31 / CCUG 7414 / JCM 2152 / NBRC 15305 / NCIMB 9373 / NCTC 2599 / NRRL B-3711).